The chain runs to 152 residues: MRLWLAAVGRARPGPARDLFEEYRGRLGWPLTLKEVEARKRVAGEELKRLEADLLLAAVPPGAILVALDERGQMLASEAFARRLGTWRDQDSADIAFVIGGADGLAEEVRRRADLLLAFGPMTWPHMLVRGMLAEQIYRAQQILAGHPYHRA.

Residues Leu68, Gly100, and 119-124 each bind S-adenosyl-L-methionine; that span reads FGPMTW.

It belongs to the RNA methyltransferase RlmH family. Homodimer.

Its subcellular location is the cytoplasm. It carries out the reaction pseudouridine(1915) in 23S rRNA + S-adenosyl-L-methionine = N(3)-methylpseudouridine(1915) in 23S rRNA + S-adenosyl-L-homocysteine + H(+). Specifically methylates the pseudouridine at position 1915 (m3Psi1915) in 23S rRNA. This is Ribosomal RNA large subunit methyltransferase H from Rhodospirillum centenum (strain ATCC 51521 / SW).